A 340-amino-acid chain; its full sequence is Large ribosomal subunit protein uL29m (340 aa).

Polar residues predominate over residues 1–10 (MIRSLHTSAV). The interval 1–22 (MIRSLHTSAVRQGRKKWPKPLP) is disordered.

It belongs to the universal ribosomal protein uL29 family. Component of the mitochondrial large ribosomal subunit. Mature mitochondrial ribosomes consist of a small (37S) and a large (54S) subunit. The 37S subunit contains at least 33 different proteins and 1 molecule of RNA (15S). The 54S subunit contains at least 45 different proteins and 1 molecule of RNA (21S).

The protein localises to the mitochondrion. The chain is Large ribosomal subunit protein uL29m (MRPL4) from Yarrowia lipolytica (strain CLIB 122 / E 150) (Yeast).